Consider the following 415-residue polypeptide: AP-3 complex subunit mu (415 aa).

The region spanning serine 178–arginine 414 is the MHD domain.

Belongs to the adaptor complexes medium subunit family. In terms of assembly, adaptor protein complex 3 (AP-3) is a heterotetramer composed of two large adaptins (delta-type subunit and beta-type subunit), a medium adaptin (mu-type subunit) and a small adaptin (sigma-type subunit).

The protein resides in the cytoplasm. It is found in the golgi apparatus. It localises to the cytoplasmic vesicle membrane. Part of the AP-3 complex, an adaptor-related complex which seems to be clathrin-associated. The complex is associated with the Golgi region as well as more peripheral structures. It facilitates the budding of vesicles from the Golgi membrane and may be directly involved in trafficking to the vacuole. It also functions in maintaining the identity of lytic vacuoles and in regulating the transition between storage and lytic vacuoles. In Arabidopsis thaliana (Mouse-ear cress), this protein is AP-3 complex subunit mu (AP3M).